Consider the following 396-residue polypeptide: NADH-quinone oxidoreductase subunit D (396 aa).

Belongs to the complex I 49 kDa subunit family. In terms of assembly, NDH-1 is composed of 14 different subunits. Subunits NuoB, C, D, E, F, and G constitute the peripheral sector of the complex.

It localises to the cell inner membrane. The catalysed reaction is a quinone + NADH + 5 H(+)(in) = a quinol + NAD(+) + 4 H(+)(out). Functionally, NDH-1 shuttles electrons from NADH, via FMN and iron-sulfur (Fe-S) centers, to quinones in the respiratory chain. The immediate electron acceptor for the enzyme in this species is believed to be ubiquinone. Couples the redox reaction to proton translocation (for every two electrons transferred, four hydrogen ions are translocated across the cytoplasmic membrane), and thus conserves the redox energy in a proton gradient. This chain is NADH-quinone oxidoreductase subunit D, found in Bartonella quintana (strain Toulouse) (Rochalimaea quintana).